The chain runs to 431 residues: Histidinol dehydrogenase (431 aa).

NAD(+)-binding residues include Y127, Q189, and N212. The substrate site is built by S237, Q259, and H262. Residues Q259 and H262 each coordinate Zn(2+). Residues E326 and H327 each act as proton acceptor in the active site. Residues H327, D360, E414, and H419 each contribute to the substrate site. D360 contributes to the Zn(2+) binding site. H419 contacts Zn(2+).

The protein belongs to the histidinol dehydrogenase family. It depends on Zn(2+) as a cofactor.

It carries out the reaction L-histidinol + 2 NAD(+) + H2O = L-histidine + 2 NADH + 3 H(+). The protein operates within amino-acid biosynthesis; L-histidine biosynthesis; L-histidine from 5-phospho-alpha-D-ribose 1-diphosphate: step 9/9. Functionally, catalyzes the sequential NAD-dependent oxidations of L-histidinol to L-histidinaldehyde and then to L-histidine. The protein is Histidinol dehydrogenase of Xanthomonas campestris pv. campestris (strain ATCC 33913 / DSM 3586 / NCPPB 528 / LMG 568 / P 25).